A 1419-amino-acid polypeptide reads, in one-letter code: Collagen alpha-1(II) chain (1419 aa).

An N-terminal signal peptide occupies residues 1–25 (MIRLGAPQSLVLLTLLIATVLQCQG). Positions 26-113 (QDARKLGPKG…PGLGGGNFAA (88 aa)) are cleaved as a propeptide — N-terminal propeptide. The segment at 28-1168 (ARKLGPKGQK…GQREKGPDPL (1141 aa)) is disordered. 2 stretches are compositionally biased toward basic and acidic residues: residues 36 to 47 (QKGEPGDIKDII) and 64 to 85 (PRGD…RDGE). Over residues 89 to 104 (PGNPGPPGPPGPPGPP) the composition is skewed to pro residues. Residue Lys-122 is modified to 5-hydroxylysine. A glycan (O-linked (Gal...) hydroxylysine) is linked at Lys-122. The segment covering 124-135 (GGAQMGVMQGPM) has biased composition (low complexity). Residues 133–1146 (GPMGPMGPRG…PGPPGPPGPP (1014 aa)) are triple-helical region. Over residues 140–149 (PRGPPGPAGA) the composition is skewed to pro residues. Low complexity predominate over residues 150-171 (PGPQGFQGNPGEPGEPGVSGPI). Positions 183–197 (PGDDGEAGKPGKAGE) are enriched in basic and acidic residues. 5-hydroxylysine occurs at positions 219, 231, and 240. O-linked (Gal...) hydroxylysine glycosylation is found at Lys-219, Lys-231, and Lys-240. 2 stretches are compositionally biased toward low complexity: residues 242-252 (ESGSPGENGSP) and 267-282 (TGPA…DGQP). The segment covering 292 to 301 (GPAGGPGFLG) has biased composition (gly residues). At Lys-306 the chain carries 5-hydroxylysine. Lys-306 carries O-linked (Gal...) hydroxylysine glycosylation. Low complexity predominate over residues 335–363 (PAGASGNPGTDGIPGAKGSAGAPGIAGAP). A compositionally biased stretch (pro residues) spans 365–374 (FPGPRGPPGP). Low complexity predominate over residues 404-417 (ETGPAGPQGAPGPA). 2 positions are modified to 5-hydroxylysine: Lys-540 and Lys-552. 2 O-linked (Gal...) hydroxylysine glycosylation sites follow: Lys-540 and Lys-552. Positions 554–563 (LAGAPGLRGL) are enriched in low complexity. 4-hydroxyproline occurs at positions 591 and 600. Residue Pro-602 is modified to 3-hydroxyproline; partial. Residues Pro-603 and Pro-606 each carry the 4-hydroxyproline modification. Positions 638-668 (ERGSPGAQGLQGPRGLPGTPGTDGPKGAAGP) are enriched in low complexity. Residues 696-707 (KGDRGDVGEKGP) show a composition bias toward basic and acidic residues. 2 stretches are compositionally biased toward low complexity: residues 765–780 (AGFA…PGAK) and 809–846 (PTGV…NGNP). Residue Pro-839 is modified to 3-hydroxyproline; partial. 4-hydroxyproline is present on residues Pro-840, Pro-846, and Pro-852. Residues 1001–1011 (APGPPGSPGPA) show a composition bias toward pro residues. The segment covering 1047–1061 (RGDKGEAGEPGERGL) has biased composition (basic and acidic residues). Residue Pro-1076 is modified to 3-hydroxyproline; partial. 2 stretches are compositionally biased toward low complexity: residues 1080 to 1089 (SGDQGTSGPA) and 1103 to 1113 (PSGKDGSNGIP). At Pro-1113 the chain carries 4-hydroxyproline. Pro-1118 is subject to 3-hydroxyproline. Position 1119 is a 4-hydroxyproline (Pro-1119). The span at 1131–1148 (AGPPGNPGPPGPPGPPGP) shows a compositional bias: pro residues. Residue Pro-1133 is modified to 3-hydroxyproline; partial. Residues Pro-1134 and Pro-1137 each carry the 4-hydroxyproline modification. Residue Pro-1139 is modified to 3-hydroxyproline; partial. 4-hydroxyproline is present on residues Pro-1140 and Pro-1143. Pro-1145 is modified (3-hydroxyproline; partial). Position 1146 is a 4-hydroxyproline (Pro-1146). A nonhelical region (C-terminal) region spans residues 1147–1173 (GPGIDMSAFAGLGQREKGPDPLQYMRA). The region spanning 1185–1419 (VEVDATLKSL…GVDIGPVCFL (235 aa)) is the Fibrillar collagen NC1 domain. 3 cysteine pairs are disulfide-bonded: Cys-1215-Cys-1247, Cys-1255-Cys-1417, and Cys-1325-Cys-1370. Ca(2+)-binding residues include Asp-1233, Asn-1235, Gln-1236, Cys-1238, and Asp-1241. A glycan (N-linked (GlcNAc...) asparagine) is linked at Asn-1320.

Belongs to the fibrillar collagen family. In terms of assembly, homotrimers of alpha 1(II) chains. In terms of processing, contains mostly 4-hydroxyproline. Prolines at the third position of the tripeptide repeating unit (G-X-P) are 4-hydroxylated in some or all of the chains. Contains 3-hydroxyproline at a few sites. This modification occurs on the first proline residue in the sequence motif Gly-Pro-Hyp, where Hyp is 4-hydroxyproline. Post-translationally, lysine residues at the third position of the tripeptide repeating unit (G-X-Y) are 5-hydroxylated in some or all of the chains. In terms of processing, O-glycosylated on hydroxylated lysine residues. The O-linked glycan consists of a Glc-Gal disaccharide. In terms of tissue distribution, expressed in chondrocytes.

It is found in the secreted. It localises to the extracellular space. Its subcellular location is the extracellular matrix. Its function is as follows. Type II collagen is specific for cartilaginous tissues. It is essential for the normal embryonic development of the skeleton, for linear growth and for the ability of cartilage to resist compressive forces. This Rattus norvegicus (Rat) protein is Collagen alpha-1(II) chain.